The primary structure comprises 508 residues: Photosystem II CP47 reaction center protein (508 aa).

Transmembrane regions (helical) follow at residues 21-36 (AVHI…WAGS), 101-115 (IVFS…IWHW), 140-156 (GIHL…FGAF), 203-218 (IAAG…FHLS), 237-252 (VLSS…AFVV), and 457-472 (SFAL…HGAR).

The protein belongs to the PsbB/PsbC family. PsbB subfamily. In terms of assembly, PSII is composed of 1 copy each of membrane proteins PsbA, PsbB, PsbC, PsbD, PsbE, PsbF, PsbH, PsbI, PsbJ, PsbK, PsbL, PsbM, PsbT, PsbX, PsbY, PsbZ, Psb30/Ycf12, at least 3 peripheral proteins of the oxygen-evolving complex and a large number of cofactors. It forms dimeric complexes. Binds multiple chlorophylls. PSII binds additional chlorophylls, carotenoids and specific lipids. is required as a cofactor.

The protein localises to the plastid. It localises to the chloroplast thylakoid membrane. In terms of biological role, one of the components of the core complex of photosystem II (PSII). It binds chlorophyll and helps catalyze the primary light-induced photochemical processes of PSII. PSII is a light-driven water:plastoquinone oxidoreductase, using light energy to abstract electrons from H(2)O, generating O(2) and a proton gradient subsequently used for ATP formation. The sequence is that of Photosystem II CP47 reaction center protein from Ranunculus macranthus (Large buttercup).